A 76-amino-acid polypeptide reads, in one-letter code: ATP synthase subunit 9, mitochondrial (76 aa).

The next 2 membrane-spanning stretches (helical) occupy residues 14–34 (IATLGLGGAAIGIALVFVALI) and 52–72 (ILGFALSEACGLFCLMISFLL).

This sequence belongs to the ATPase C chain family. As to quaternary structure, F-type ATPases have 2 components, CF(1) - the catalytic core - and CF(0) - the membrane proton channel. CF(1) has five subunits: alpha(3), beta(3), gamma(1), delta(1), epsilon(1). CF(0) has three main subunits: a, b and c.

Its subcellular location is the mitochondrion membrane. In terms of biological role, mitochondrial membrane ATP synthase (F(1)F(0) ATP synthase or Complex V) produces ATP from ADP in the presence of a proton gradient across the membrane which is generated by electron transport complexes of the respiratory chain. F-type ATPases consist of two structural domains, F(1) - containing the extramembraneous catalytic core and F(0) - containing the membrane proton channel, linked together by a central stalk and a peripheral stalk. During catalysis, ATP synthesis in the catalytic domain of F(1) is coupled via a rotary mechanism of the central stalk subunits to proton translocation. Part of the complex F(0) domain. A homomeric c-ring of probably 10 subunits is part of the complex rotary element. In Candida albicans (strain SC5314 / ATCC MYA-2876) (Yeast), this protein is ATP synthase subunit 9, mitochondrial (ATP9).